We begin with the raw amino-acid sequence, 698 residues long: Elongation factor G (698 aa).

In terms of domain architecture, tr-type G spans 8–284 (ANVRNIGIMA…AVVDFLPSPL (277 aa)). Residues 17–24 (AHIDAGKT), 81–85 (DTPGH), and 135–138 (NKLD) contribute to the GTP site. The disordered stretch occupies residues 289-309 (IEGTGTDGETPLQRKPSTSEP).

It belongs to the TRAFAC class translation factor GTPase superfamily. Classic translation factor GTPase family. EF-G/EF-2 subfamily.

It is found in the cytoplasm. Functionally, catalyzes the GTP-dependent ribosomal translocation step during translation elongation. During this step, the ribosome changes from the pre-translocational (PRE) to the post-translocational (POST) state as the newly formed A-site-bound peptidyl-tRNA and P-site-bound deacylated tRNA move to the P and E sites, respectively. Catalyzes the coordinated movement of the two tRNA molecules, the mRNA and conformational changes in the ribosome. In Salinispora arenicola (strain CNS-205), this protein is Elongation factor G.